The following is a 269-amino-acid chain: Hydroxyethylthiazole kinase (269 aa).

Met41 provides a ligand contact to substrate. ATP-binding residues include Arg117 and Ser165. Position 192 (Gly192) interacts with substrate.

The protein belongs to the Thz kinase family. Requires Mg(2+) as cofactor.

The catalysed reaction is 5-(2-hydroxyethyl)-4-methylthiazole + ATP = 4-methyl-5-(2-phosphooxyethyl)-thiazole + ADP + H(+). The protein operates within cofactor biosynthesis; thiamine diphosphate biosynthesis; 4-methyl-5-(2-phosphoethyl)-thiazole from 5-(2-hydroxyethyl)-4-methylthiazole: step 1/1. Functionally, catalyzes the phosphorylation of the hydroxyl group of 4-methyl-5-beta-hydroxyethylthiazole (THZ). The polypeptide is Hydroxyethylthiazole kinase (Actinobacillus succinogenes (strain ATCC 55618 / DSM 22257 / CCUG 43843 / 130Z)).